The primary structure comprises 315 residues: ATP synthase gamma chain (315 aa).

The protein belongs to the ATPase gamma chain family. In terms of assembly, F-type ATPases have 2 components, CF(1) - the catalytic core - and CF(0) - the membrane proton channel. CF(1) has five subunits: alpha(3), beta(3), gamma(1), delta(1), epsilon(1). CF(0) has three main subunits: a, b and c.

The protein resides in the cellular thylakoid membrane. In terms of biological role, produces ATP from ADP in the presence of a proton gradient across the membrane. The gamma chain is believed to be important in regulating ATPase activity and the flow of protons through the CF(0) complex. This is ATP synthase gamma chain from Nostoc punctiforme (strain ATCC 29133 / PCC 73102).